The chain runs to 1235 residues: Major DNA-binding protein (1235 aa).

The interval glycine 536–glycine 584 is disordered. Positions glycine 545–glycine 584 are enriched in gly residues. Positions phenylalanine 846–tryptophan 847 match the Required for filament formation motif. Residues glycine 1214–glycine 1226 are compositionally biased toward gly residues. Residues glycine 1214–leucine 1235 form a disordered region. The interval arginine 1232–leucine 1235 is required for nuclear localization.

It belongs to the herpesviridae major DNA-binding protein family. In terms of assembly, homooligomers. Forms double-helical filaments necessary for the formation of replication compartments within the host nucleus. Interacts with the origin-binding protein. Interacts with the helicase primase complex; this interaction stimulates primer synthesis activity of the helicase-primase complex. Interacts with the DNA polymerase. Interacts with the alkaline exonuclease; this interaction increases its nuclease processivity.

Its subcellular location is the host nucleus. Plays several crucial roles in viral infection. Participates in the opening of the viral DNA origin to initiate replication by interacting with the origin-binding protein. May disrupt loops, hairpins and other secondary structures present on ssDNA to reduce and eliminate pausing of viral DNA polymerase at specific sites during elongation. Promotes viral DNA recombination by performing strand-transfer, characterized by the ability to transfer a DNA strand from a linear duplex to a complementary single-stranded DNA circle. Can also catalyze the renaturation of complementary single strands. Additionally, reorganizes the host cell nucleus, leading to the formation of prereplicative sites and replication compartments. This process is driven by the protein which can form double-helical filaments in the absence of DNA. This Homo sapiens (Human) protein is Major DNA-binding protein.